Here is a 264-residue protein sequence, read N- to C-terminus: Phosphonoacetaldehyde hydrolase (264 aa).

Asp9 (nucleophile) is an active-site residue. Residues Asp9 and Ala11 each contribute to the Mg(2+) site. Lys50 serves as the catalytic Schiff-base intermediate with substrate. Position 183 (Asp183) interacts with Mg(2+).

It belongs to the HAD-like hydrolase superfamily. PhnX family. Homodimer. The cofactor is Mg(2+).

It carries out the reaction phosphonoacetaldehyde + H2O = acetaldehyde + phosphate + H(+). Its function is as follows. Involved in phosphonate degradation. This chain is Phosphonoacetaldehyde hydrolase, found in Bacillus anthracis.